Here is a 378-residue protein sequence, read N- to C-terminus: Lipoyl synthase, mitochondrial (378 aa).

Residues Cys-109, Cys-114, Cys-120, Cys-140, Cys-144, Cys-147, and Ser-356 each coordinate [4Fe-4S] cluster. The 221-residue stretch at 125 to 345 (ETGTATATIM…QTLGMEMGFR (221 aa)) folds into the Radical SAM core domain.

The protein belongs to the radical SAM superfamily. Lipoyl synthase family. [4Fe-4S] cluster serves as cofactor.

It localises to the mitochondrion. It catalyses the reaction [[Fe-S] cluster scaffold protein carrying a second [4Fe-4S](2+) cluster] + N(6)-octanoyl-L-lysyl-[protein] + 2 oxidized [2Fe-2S]-[ferredoxin] + 2 S-adenosyl-L-methionine + 4 H(+) = [[Fe-S] cluster scaffold protein] + N(6)-[(R)-dihydrolipoyl]-L-lysyl-[protein] + 4 Fe(3+) + 2 hydrogen sulfide + 2 5'-deoxyadenosine + 2 L-methionine + 2 reduced [2Fe-2S]-[ferredoxin]. Its pathway is protein modification; protein lipoylation via endogenous pathway; protein N(6)-(lipoyl)lysine from octanoyl-[acyl-carrier-protein]: step 2/2. Catalyzes the radical-mediated insertion of two sulfur atoms into the C-6 and C-8 positions of the octanoyl moiety bound to the lipoyl domains of lipoate-dependent enzymes, thereby converting the octanoylated domains into lipoylated derivatives. This Medicago truncatula (Barrel medic) protein is Lipoyl synthase, mitochondrial.